Consider the following 966-residue polypeptide: Protein STICHEL-like 4 (966 aa).

Disordered stretches follow at residues 64–118 (RSLR…DRSS) and 200–237 (RDNA…REQN). Residues 75 to 84 (LKEDHQDSRE) are compositionally biased toward basic and acidic residues. The segment covering 98-108 (PIVSFGTSKVT) has biased composition (polar residues). The span at 109-118 (PSDEKFDRSS) shows a compositional bias: basic and acidic residues. Residues 208–217 (SEMSIASNSV) show a composition bias toward polar residues. The segment covering 219 to 236 (RGEKYEGEEGGGGRDREQ) has biased composition (basic and acidic residues). 384–391 (GPNGTGKT) lines the ATP pocket. Zn(2+) contacts are provided by Cys403, Cys412, Cys415, and Cys418. The stretch at 650–678 (SKEDMEKLKQALKTLSESEKQLRVSNDKL) forms a coiled coil. Over residues 706–717 (FNHTPLTDSDPS) the composition is skewed to polar residues. Residues 706-733 (FNHTPLTDSDPSNHVVAGTRRDDSKQGF) are disordered.

It belongs to the DnaX/STICHEL family.

The sequence is that of Protein STICHEL-like 4 from Arabidopsis thaliana (Mouse-ear cress).